Consider the following 744-residue polypeptide: Leucine-rich repeat extensin-like protein 1 (744 aa).

An N-terminal signal peptide occupies residues 1 to 26 (MLFPPLRSLFLFTLLLSSVCFLQIKA). N-linked (GlcNAc...) asparagine glycans are attached at residues asparagine 71 and asparagine 77. LRR repeat units lie at residues 122-145 (LSDL…TFNR), 147-170 (KLLY…VLSL), 171-194 (PSLK…LFDR), 196-217 (LDAI…MGNS), 219-240 (VSAL…IGQM), 241-265 (GKTL…IGNL), 266-289 (KKVT…VGNM), 290-313 (KSLE…ICQL), and 315-336 (NLEN…CAAS). N-linked (GlcNAc...) asparagine glycosylation is present at asparagine 253. 2 N-linked (GlcNAc...) asparagine glycosylation sites follow: asparagine 318 and asparagine 344. One copy of the LRR 10 repeat lies at 381 to 404 (FSPPPPTFKMSPEVRTLPPPIYVY). A contains the Ser-Pro(4) repeats region spans residues 382-744 (SPPPPTFKMS…ASPPPPPSYY (363 aa)). 4 disordered regions span residues 408–445 (PPPP…PPPP), 518–537 (VYSS…PESS), 555–576 (PSPV…VYYP), and 658–744 (PPPS…PSYY). Over residues 430–439 (SKMSPSVRAY) the composition is skewed to low complexity. Positions 704-729 (YEPPPEYSYSSSPPPPSPTSYFPPMP) are enriched in pro residues.

In terms of processing, hydroxylated on proline residues in the S-P-P-P-P repeat. O-glycosylated on hydroxyprolines. As to expression, expressed in root hair cells (at protein level).

It is found in the secreted. The protein resides in the cell wall. In terms of biological role, modulates cell morphogenesis by regulating cell wall formation and assembly, and/or growth polarization. Together with LRX2, component of the extracellular mechanism regulating root hair morphogenesis and elongation. This Arabidopsis thaliana (Mouse-ear cress) protein is Leucine-rich repeat extensin-like protein 1 (LRX1).